A 288-amino-acid chain; its full sequence is B3 domain-containing protein At2g35310 (288 aa).

2 consecutive DNA-binding regions (TF-B3) follow at residues 19 to 114 and 196 to 288; these read FFKV…FMQD and AEFS…VSKP.

The protein resides in the nucleus. The sequence is that of B3 domain-containing protein At2g35310 from Arabidopsis thaliana (Mouse-ear cress).